A 492-amino-acid polypeptide reads, in one-letter code: MATETLDKQKTIDLRKKHVGPSCKVFFDHDPIKIVRAKGQYMYNEKDEKYLDCINNVAHVGHCHPDVVSAGAKQMELLNTNSRFLHDSLVLYAQRLQATLPEKLSVCYFVNSGSEANDLALRLAWQYTGHKDIITLDNAYHGHVSSLIDISPYKFHQMAGAEPSQHVHVALSPDTYRGKYREDHPDPATAYAENVKEVIEEAHKKGHEIAAFIAESLQSCGGQVIPPMGYFQKVAQHVRNAGGIFIADEVQVGFGRVGTHFWGFQLQGEDFVPDIVTMGKPIGNGHPMSCVITSREIAESFMSSGMEYFNTFGGNPVSCAIGLAVLNVIEKEDLQGNALHVGGYLTQLLEDLKKRHPLVGDVRGRGLFVGLELVRNQSKRTPATAEAQEVIYRLKEQRILLSADGPHRNVLKFKPPMCFSREDAEFAVEKIDQILTDLEKAMVLQRPEAAILETGHIKRKDASDENGLVHPSNGNSHKHTSTIPLSKKTKRN.

Lys-280 carries the N6-(pyridoxal phosphate)lysine modification. The segment at 462–492 (ASDENGLVHPSNGNSHKHTSTIPLSKKTKRN) is disordered.

Belongs to the class-III pyridoxal-phosphate-dependent aminotransferase family. Homotetramer. Requires pyridoxal 5'-phosphate as cofactor.

Its subcellular location is the mitochondrion. The catalysed reaction is phosphoethanolamine + H2O = acetaldehyde + NH4(+) + phosphate. Functionally, catalyzes the pyridoxal-phosphate-dependent breakdown of phosphoethanolamine, converting it to ammonia, inorganic phosphate and acetaldehyde. In Danio rerio (Zebrafish), this protein is Ethanolamine-phosphate phospho-lyase (etnppl).